The following is a 397-amino-acid chain: Elongation factor Tu-1 (397 aa).

A tr-type G domain is found at 10 to 206 (KPHVNIGTIG…AVDENIPEPE (197 aa)). The segment at 19-26 (GHIDHGKT) is G1. Residue 19–26 (GHIDHGKT) coordinates GTP. Thr-26 contributes to the Mg(2+) binding site. The interval 62-66 (GITIS) is G2. Residues 83-86 (DCPG) are G3. Residues 83 to 87 (DCPGH) and 138 to 141 (NKAD) each bind GTP. Residues 138–141 (NKAD) are G4. A G5 region spans residues 176-178 (SAL). At Thr-386 the chain carries Phosphothreonine.

Belongs to the TRAFAC class translation factor GTPase superfamily. Classic translation factor GTPase family. EF-Tu/EF-1A subfamily. As to quaternary structure, monomer. Post-translationally, phosphorylated on threonine and serine.

It localises to the cytoplasm. It catalyses the reaction GTP + H2O = GDP + phosphate + H(+). In terms of biological role, GTP hydrolase that promotes the GTP-dependent binding of aminoacyl-tRNA to the A-site of ribosomes during protein biosynthesis. This is Elongation factor Tu-1 from Streptomyces collinus.